The following is a 658-amino-acid chain: Threonine--tRNA ligase (658 aa).

The TGS domain occupies 1-61; that stretch reads MSDVRVIIQR…KDGEEVEPVQ (61 aa). The segment at 259–554 is catalytic; that stretch reads DHRKLGNELD…LLEHYAGAFP (296 aa). 3 residues coordinate Zn(2+): C353, H404, and H531.

The protein belongs to the class-II aminoacyl-tRNA synthetase family. In terms of assembly, homodimer. Requires Zn(2+) as cofactor.

The protein resides in the cytoplasm. It catalyses the reaction tRNA(Thr) + L-threonine + ATP = L-threonyl-tRNA(Thr) + AMP + diphosphate + H(+). Its function is as follows. Catalyzes the attachment of threonine to tRNA(Thr) in a two-step reaction: L-threonine is first activated by ATP to form Thr-AMP and then transferred to the acceptor end of tRNA(Thr). Also edits incorrectly charged L-seryl-tRNA(Thr). This chain is Threonine--tRNA ligase, found in Streptomyces avermitilis (strain ATCC 31267 / DSM 46492 / JCM 5070 / NBRC 14893 / NCIMB 12804 / NRRL 8165 / MA-4680).